Reading from the N-terminus, the 380-residue chain is Cytochrome b (380 aa).

4 helical membrane passes run 34-54 (FGSL…LLAM), 78-99 (WLIR…YLHI), 114-134 (WNTG…GYVL), and 179-199 (FFAL…IHLT). Heme b is bound by residues His84 and His98. The heme b site is built by His183 and His197. His202 contributes to the a ubiquinone binding site. The next 4 helical transmembrane spans lie at 227-247 (LKDI…ALFS), 289-309 (LGGV…PFLH), 321-341 (ISQL…WVGS), and 348-368 (FIII…VLFP).

It belongs to the cytochrome b family. As to quaternary structure, the cytochrome bc1 complex contains 11 subunits: 3 respiratory subunits (MT-CYB, CYC1 and UQCRFS1), 2 core proteins (UQCRC1 and UQCRC2) and 6 low-molecular weight proteins (UQCRH/QCR6, UQCRB/QCR7, UQCRQ/QCR8, UQCR10/QCR9, UQCR11/QCR10 and a cleavage product of UQCRFS1). This cytochrome bc1 complex then forms a dimer. Heme b is required as a cofactor.

The protein resides in the mitochondrion inner membrane. In terms of biological role, component of the ubiquinol-cytochrome c reductase complex (complex III or cytochrome b-c1 complex) that is part of the mitochondrial respiratory chain. The b-c1 complex mediates electron transfer from ubiquinol to cytochrome c. Contributes to the generation of a proton gradient across the mitochondrial membrane that is then used for ATP synthesis. The sequence is that of Cytochrome b (MT-CYB) from Pelecanoides georgicus (South Georgia diving petrel).